Consider the following 299-residue polypeptide: Taste receptor type 2 member 16 (299 aa).

Topologically, residues 1–5 (MVPTQ) are extracellular. A helical membrane pass occupies residues 6 to 26 (VTIFSIIMYVLESLVIIVQSC). Over 27-44 (TTVAVLFREWMHFQRLSP) the chain is Cytoplasmic. Residues 45 to 65 (VEIILISLGISHFCLQWTSML) form a helical membrane-spanning segment. The Extracellular portion of the chain corresponds to 66-82 (YNFGTYSRPVLLFWKVS). A helical transmembrane segment spans residues 83–103 (VVWEFMNVLTFWLTSLLAVLY). Residues 104–125 (CVKVSSFSHPVFLWLRLKILKL) lie on the Cytoplasmic side of the membrane. Residues 126–146 (VLWLLLGALIASCLSIIPSVV) form a helical membrane-spanning segment. The Extracellular portion of the chain corresponds to 147 to 183 (KYHIQMELLTLDHLPKNSSLILRLQMFEWYFSNPFKM). Asn163 is a glycosylation site (N-linked (GlcNAc...) asparagine). Residues 184–204 (IGFGVPFLVFLISIILLTVSL) traverse the membrane as a helical segment. At 205-233 (VQHWGQMKHYSSSSSSLRAQCTVLKSLAT) the chain is on the cytoplasmic side. The helical transmembrane segment at 234–254 (FFIFFTSYFLTIVVSFIGTVF) threads the bilayer. At 255 to 258 (DKKS) the chain is on the extracellular side. Residues 259–279 (WFWVCEAVIYGLVCIHFTSLM) form a helical membrane-spanning segment. At 280–299 (MSNPTLKKALRLQFWSPESS) the chain is on the cytoplasmic side.

It belongs to the G-protein coupled receptor T2R family. In terms of assembly, interacts with RTP3 and RTP4. Expressed in subsets of taste receptor cells of the tongue and palate epithelium and exclusively in gustducin-positive cells. Expressed in the antrum and fundus (part of the stomach), duodenum and in gastric endocrine cells.

Its subcellular location is the cell membrane. Gustducin-coupled receptor implicated in the perception of bitter compounds in the oral cavity and the gastrointestinal tract. Signals through PLCB2 and the calcium-regulated cation channel TRPM5. This Rattus norvegicus (Rat) protein is Taste receptor type 2 member 16 (Tas2r16).